The sequence spans 503 residues: Cytochrome P450 11B1, mitochondrial (503 aa).

The N-terminal 24 residues, 1–24, are a transit peptide targeting the mitochondrion; that stretch reads MALRAKAEVCMAVPWLSLQRAQAL. Position 450 (C450) interacts with heme.

Belongs to the cytochrome P450 family. Heme is required as a cofactor. In terms of tissue distribution, expressed in the zona fasciculata/reticularis of the adrenal cortex.

It localises to the mitochondrion inner membrane. The catalysed reaction is a steroid + 2 reduced [adrenodoxin] + O2 + 2 H(+) = an 11beta-hydroxysteroid + 2 oxidized [adrenodoxin] + H2O. The enzyme catalyses 11-deoxycortisol + 2 reduced [adrenodoxin] + O2 + 2 H(+) = cortisol + 2 oxidized [adrenodoxin] + H2O. It catalyses the reaction 21-hydroxyprogesterone + 2 reduced [adrenodoxin] + O2 + 2 H(+) = corticosterone + 2 oxidized [adrenodoxin] + H2O. It functions in the pathway steroid biosynthesis; glucocorticoid biosynthesis. It participates in steroid hormone biosynthesis. In terms of biological role, a cytochrome P450 monooxygenase involved in the biosynthesis of adrenal corticoids. Catalyzes a variety of reactions that are essential for many species, including detoxification, defense, and the formation of endogenous chemicals like steroid hormones. Steroid 11beta, 18- and 19-hydroxylase with preferred regioselectivity at 11beta, then 18, and lastly 19. Catalyzes the hydroxylation of 11-deoxycortisol and 11-deoxycorticosterone (21-hydroxyprogesterone) at 11beta position, yielding cortisol or corticosterone, respectively, but cannot produce aldosterone. Mechanistically, uses molecular oxygen inserting one oxygen atom into a substrate for hydroxylation and reducing the second into a water molecule. Two electrons are provided by NADPH via a two-protein mitochondrial transfer system comprising flavoprotein FDXR (adrenodoxin/ferredoxin reductase) and nonheme iron-sulfur protein FDX1 or FDX2 (adrenodoxin/ferredoxin). Due to its lack of 18-oxidation activity, it is incapable of generating aldosterone. Could also be involved in the androgen metabolic pathway. The sequence is that of Cytochrome P450 11B1, mitochondrial from Homo sapiens (Human).